The chain runs to 288 residues: ATP synthase gamma chain (288 aa).

Belongs to the ATPase gamma chain family. F-type ATPases have 2 components, CF(1) - the catalytic core - and CF(0) - the membrane proton channel. CF(1) has five subunits: alpha(3), beta(3), gamma(1), delta(1), epsilon(1). CF(0) has three main subunits: a, b and c.

The protein localises to the cell membrane. Its function is as follows. Produces ATP from ADP in the presence of a proton gradient across the membrane. The gamma chain is believed to be important in regulating ATPase activity and the flow of protons through the CF(0) complex. The chain is ATP synthase gamma chain from Staphylococcus haemolyticus (strain JCSC1435).